A 415-amino-acid chain; its full sequence is Histidine--tRNA ligase (415 aa).

It belongs to the class-II aminoacyl-tRNA synthetase family. In terms of assembly, homodimer.

The protein localises to the cytoplasm. The enzyme catalyses tRNA(His) + L-histidine + ATP = L-histidyl-tRNA(His) + AMP + diphosphate + H(+). In Rickettsia bellii (strain RML369-C), this protein is Histidine--tRNA ligase.